The primary structure comprises 147 residues: Transmembrane protein 210 (147 aa).

The N-terminal stretch at methionine 1–glycine 31 is a signal peptide. Topologically, residues threonine 32–alanine 47 are extracellular. A helical membrane pass occupies residues leucine 48–isoleucine 68. The Cytoplasmic portion of the chain corresponds to glycine 69–glutamine 147. A disordered region spans residues threonine 128–glutamine 147. A compositionally biased stretch (pro residues) spans leucine 133–glutamine 147.

It is found in the membrane. The protein resides in the cytoplasmic vesicle. Its subcellular location is the secretory vesicle. It localises to the acrosome. This Mus musculus (Mouse) protein is Transmembrane protein 210 (Tmem210).